Reading from the N-terminus, the 505-residue chain is Lysine--tRNA ligase (505 aa).

Mg(2+)-binding residues include glutamate 415 and glutamate 422.

It belongs to the class-II aminoacyl-tRNA synthetase family. In terms of assembly, homodimer. It depends on Mg(2+) as a cofactor.

Its subcellular location is the cytoplasm. The enzyme catalyses tRNA(Lys) + L-lysine + ATP = L-lysyl-tRNA(Lys) + AMP + diphosphate. The chain is Lysine--tRNA ligase (lysS) from Escherichia coli (strain K12).